Reading from the N-terminus, the 213-residue chain is Probable elongation factor 1-beta/1-delta 1 (213 aa).

This sequence belongs to the EF-1-beta/EF-1-delta family. EF-1 is composed of 4 subunits: alpha, beta, delta, and gamma.

In terms of biological role, EF-1-beta and EF-1-delta stimulate the exchange of GDP bound to EF-1-alpha to GTP. The sequence is that of Probable elongation factor 1-beta/1-delta 1 (eef-1B.1) from Caenorhabditis elegans.